Here is a 271-residue protein sequence, read N- to C-terminus: Formamidopyrimidine-DNA glycosylase (271 aa).

The active-site Schiff-base intermediate with DNA is proline 2. Glutamate 3 functions as the Proton donor in the catalytic mechanism. The active-site Proton donor; for beta-elimination activity is the lysine 58. Histidine 92, arginine 111, and arginine 152 together coordinate DNA. Residues 237–271 (MVYGREGQACKHCGRELKHATIGQRATVWCAACQR) form an FPG-type zinc finger. Arginine 261 (proton donor; for delta-elimination activity) is an active-site residue.

This sequence belongs to the FPG family. In terms of assembly, monomer. Requires Zn(2+) as cofactor.

It carries out the reaction Hydrolysis of DNA containing ring-opened 7-methylguanine residues, releasing 2,6-diamino-4-hydroxy-5-(N-methyl)formamidopyrimidine.. It catalyses the reaction 2'-deoxyribonucleotide-(2'-deoxyribose 5'-phosphate)-2'-deoxyribonucleotide-DNA = a 3'-end 2'-deoxyribonucleotide-(2,3-dehydro-2,3-deoxyribose 5'-phosphate)-DNA + a 5'-end 5'-phospho-2'-deoxyribonucleoside-DNA + H(+). Functionally, involved in base excision repair of DNA damaged by oxidation or by mutagenic agents. Acts as a DNA glycosylase that recognizes and removes damaged bases. Has a preference for oxidized purines, such as 7,8-dihydro-8-oxoguanine (8-oxoG). Has AP (apurinic/apyrimidinic) lyase activity and introduces nicks in the DNA strand. Cleaves the DNA backbone by beta-delta elimination to generate a single-strand break at the site of the removed base with both 3'- and 5'-phosphates. The polypeptide is Formamidopyrimidine-DNA glycosylase (Xanthomonas campestris pv. campestris (strain B100)).